The following is a 180-amino-acid chain: Ribonuclease M5 (180 aa).

The region spanning Lys-5 to Ser-90 is the Toprim domain. Glu-11, Asp-59, and Asp-61 together coordinate Mg(2+).

The protein belongs to the ribonuclease M5 family. Requires Mg(2+) as cofactor.

It localises to the cytoplasm. It catalyses the reaction Endonucleolytic cleavage of RNA, removing 21 and 42 nucleotides, respectively, from the 5'- and 3'-termini of a 5S-rRNA precursor.. Required for correct processing of both the 5' and 3' ends of 5S rRNA precursor. Cleaves both sides of a double-stranded region yielding mature 5S rRNA in one step. The chain is Ribonuclease M5 from Mycoplasma capricolum subsp. capricolum (strain California kid / ATCC 27343 / NCTC 10154).